Here is a 167-residue protein sequence, read N- to C-terminus: Probable glutathione peroxidase 8 (167 aa).

Residue Cys41 is part of the active site.

The protein belongs to the glutathione peroxidase family.

The catalysed reaction is 2 glutathione + H2O2 = glutathione disulfide + 2 H2O. Functionally, may constitute a glutathione peroxidase-like protective system against oxidative stresses. The polypeptide is Probable glutathione peroxidase 8 (GPX8) (Arabidopsis thaliana (Mouse-ear cress)).